Consider the following 157-residue polypeptide: 6,7-dimethyl-8-ribityllumazine synthase (157 aa).

Residues Phe22, 56–58, and 80–82 each bind 5-amino-6-(D-ribitylamino)uracil; these read AME and AVV. (2S)-2-hydroxy-3-oxobutyl phosphate is bound at residue 85-86; the sequence is ET. The active-site Proton donor is His88. Phe113 lines the 5-amino-6-(D-ribitylamino)uracil pocket. Arg127 is a binding site for (2S)-2-hydroxy-3-oxobutyl phosphate.

It belongs to the DMRL synthase family.

It carries out the reaction (2S)-2-hydroxy-3-oxobutyl phosphate + 5-amino-6-(D-ribitylamino)uracil = 6,7-dimethyl-8-(1-D-ribityl)lumazine + phosphate + 2 H2O + H(+). The protein operates within cofactor biosynthesis; riboflavin biosynthesis; riboflavin from 2-hydroxy-3-oxobutyl phosphate and 5-amino-6-(D-ribitylamino)uracil: step 1/2. Its function is as follows. Catalyzes the formation of 6,7-dimethyl-8-ribityllumazine by condensation of 5-amino-6-(D-ribitylamino)uracil with 3,4-dihydroxy-2-butanone 4-phosphate. This is the penultimate step in the biosynthesis of riboflavin. The protein is 6,7-dimethyl-8-ribityllumazine synthase of Levilactobacillus brevis (strain ATCC 367 / BCRC 12310 / CIP 105137 / JCM 1170 / LMG 11437 / NCIMB 947 / NCTC 947) (Lactobacillus brevis).